A 209-amino-acid polypeptide reads, in one-letter code: Ribosomal RNA small subunit methyltransferase G (209 aa).

Residues glycine 75, leucine 80, valine 126–glutamate 127, and arginine 141 contribute to the S-adenosyl-L-methionine site.

Belongs to the methyltransferase superfamily. RNA methyltransferase RsmG family.

Its subcellular location is the cytoplasm. It carries out the reaction guanosine(527) in 16S rRNA + S-adenosyl-L-methionine = N(7)-methylguanosine(527) in 16S rRNA + S-adenosyl-L-homocysteine. Its function is as follows. Specifically methylates the N7 position of guanine in position 527 of 16S rRNA. The polypeptide is Ribosomal RNA small subunit methyltransferase G (Colwellia psychrerythraea (strain 34H / ATCC BAA-681) (Vibrio psychroerythus)).